Here is a 315-residue protein sequence, read N- to C-terminus: Acetyl-coenzyme A carboxylase carboxyl transferase subunit alpha (315 aa).

The CoA carboxyltransferase C-terminal domain occupies 36–289; sequence LSKKRLELME…RKAVAAELKI (254 aa).

This sequence belongs to the AccA family. As to quaternary structure, acetyl-CoA carboxylase is a heterohexamer composed of biotin carboxyl carrier protein (AccB), biotin carboxylase (AccC) and two subunits each of ACCase subunit alpha (AccA) and ACCase subunit beta (AccD).

Its subcellular location is the cytoplasm. The enzyme catalyses N(6)-carboxybiotinyl-L-lysyl-[protein] + acetyl-CoA = N(6)-biotinyl-L-lysyl-[protein] + malonyl-CoA. It functions in the pathway lipid metabolism; malonyl-CoA biosynthesis; malonyl-CoA from acetyl-CoA: step 1/1. Functionally, component of the acetyl coenzyme A carboxylase (ACC) complex. First, biotin carboxylase catalyzes the carboxylation of biotin on its carrier protein (BCCP) and then the CO(2) group is transferred by the carboxyltransferase to acetyl-CoA to form malonyl-CoA. This is Acetyl-coenzyme A carboxylase carboxyl transferase subunit alpha from Francisella tularensis subsp. holarctica (strain FTNF002-00 / FTA).